A 117-amino-acid polypeptide reads, in one-letter code: Transcription elongation factor SPT4 (117 aa).

The interval 1 to 40 (MALETVPKDLRHLRACLLCSLVKTIDQFEYDGCDNCDAYL) is interaction with SUPT5H. The C4-type zinc finger occupies 16-36 (CLLCSLVKTIDQFEYDGCDNC).

The protein belongs to the SPT4 family. As to quaternary structure, interacts with SUPT5H to form the DSIF complex. DSIF interacts with RNA polymerase II and with the positive transcription elongation factor b complex (P-TEFb complex), which is composed of CDK9 and cyclin-T.

It is found in the nucleus. May function as a component of the DRB sensitivity-inducing factor complex (DSIF complex), which regulates transcription elongation by RNA polymerase II. Probably enhances transcriptional pausing at sites proximal to the promoter, which may in turn facilitate the assembly of an elongation competent RNA polymerase II complex. The polypeptide is Transcription elongation factor SPT4 (supt4h1) (Xenopus laevis (African clawed frog)).